The chain runs to 521 residues: MSL complex subunit 3 (521 aa).

Residues serine 13–histidine 71 form the Tudor-knot domain. Disordered regions lie at residues lysine 114 to glutamate 166 and alanine 298 to glutamate 409. The segment covering lysine 139–isoleucine 149 has biased composition (acidic residues). Over residues glutamate 150–glutamate 166 the composition is skewed to basic and acidic residues. One can recognise an MRG domain in the interval glutamate 168–proline 517. The segment at phenylalanine 290 to proline 440 is required for the histone acetyltransferase activity of the MSL complex. Residues serine 309 and serine 311 each carry the phosphoserine modification. The span at asparagine 316–threonine 329 shows a compositional bias: low complexity. Phosphoserine is present on residues serine 367 and serine 400. The residue at position 405 (threonine 405) is a Phosphothreonine. Phosphoserine occurs at positions 407 and 411.

Component of the MSL histone acetyltransferase complex at least composed of the KAT8/MOF, MSL1/hampin, MSL2 and MSL3. Interacts (via the MRG domain) with MSL1 and KAT8/MOF. As to expression, expressed in many tissues including liver, pancreas, heart, lung, kidney, skeletal muscle, brain, and placenta, with highest expression in skeletal muscle and heart.

The protein resides in the nucleus. Its function is as follows. Non-catalytic component of the MSL histone acetyltransferase complex, a multiprotein complex that mediates the majority of histone H4 acetylation at 'Lys-16' (H4K16ac), an epigenetic mark that prevents chromatin compaction. The MSL complex is required for chromosome stability and genome integrity by maintaining homeostatic levels of H4K16ac. The MSL complex is also involved in gene dosage by promoting up-regulation of genes expressed by the X chromosome. X up-regulation is required to compensate for autosomal biallelic expression. The MSL complex also participates in gene dosage compensation by promoting expression of Tsix non-coding RNA. Acts as a histone reader that specifically recognizes and binds histone H4 monomethylated at 'Lys-20' (H4K20Me1) in a DNA-dependent manner and is proposed to be involved in chromosomal targeting of the MSL complex. May play a role X inactivation in females. The chain is MSL complex subunit 3 from Homo sapiens (Human).